We begin with the raw amino-acid sequence, 1787 residues long: ATP-dependent RNA helicase DEAH11, chloroplastic (1787 aa).

Residues 1 to 33 constitute a chloroplast transit peptide; it reads MRNSFPPSDGGRSTTDRRQQSFPSSSTNRYNSR. The segment at 1-75 is disordered; the sequence is MRNSFPPSDG…DRAPSSGFSP (75 aa). The span at 20–60 shows a compositional bias: polar residues; sequence QSFPSSSTNRYNSRSAQSSPPLNHCTTWNQQHSQYHNTNFP. Positions 313–477 constitute a Helicase ATP-binding domain; sequence LKKIHCEQIM…LFDCGILHVN (165 aa). 326–333 contacts ATP; the sequence is GETGSGKS. The DEAH box signature appears at 424–427; sequence DEAH. Positions 507–673 constitute a Helicase C-terminal domain; sequence DVVKMAVEIH…VALLRMLALG (167 aa). The interval 1557–1764 is TRIAD supradomain; that stretch reads IELECPICLS…EPCYAHLRTI (208 aa). Positions 1561, 1564, 1577, 1579, 1582, 1585, 1604, 1609, 1649, 1654, 1672, 1675, 1680, 1683, 1688, 1693, 1719, and 1722 each coordinate Zn(2+). An RING-type 1 zinc finger spans residues 1561–1609; that stretch reads CPICLSEVDDGYSLEGCSHLFCKACLLEQFEASMRNFDAFPILCSHIDC. The IBR-type zinc finger occupies 1628–1693; that stretch reads DELISASLSA…HLEYHPLITC (66 aa). The segment at 1719–1747 adopts an RING-type 2; atypical zinc-finger fold; that stretch reads CPICKSTIEKTDGCNHLQCRCGKHICWTC. Residue C1732 is part of the active site. 2 residues coordinate Zn(2+): C1737 and C1739.

This sequence belongs to the DEAD box helicase family. DEAH subfamily.

The protein localises to the plastid. It is found in the chloroplast. It catalyses the reaction ATP + H2O = ADP + phosphate + H(+). This is ATP-dependent RNA helicase DEAH11, chloroplastic from Arabidopsis thaliana (Mouse-ear cress).